Reading from the N-terminus, the 670-residue chain is DEAD-box ATP-dependent RNA helicase 16 (670 aa).

The span at 1-10 shows a compositional bias: low complexity; it reads MAAAAAASSM. The tract at residues 1 to 97 is disordered; it reads MAAAAAASSM…EEREVSFDEL (97 aa). Composition is skewed to basic and acidic residues over residues 18–30 and 40–49; these read AATE…HDEA and NDGHTAHAAE. A Q motif motif is present at residues 92-120; the sequence is VSFDELGLDEQLKRALRKKGLDKATPIQR. The Helicase ATP-binding domain maps to 123 to 306; sequence IPLILEGKDV…KLLLHNPFIL (184 aa). Position 136–143 (136–143) interacts with ATP; the sequence is AKTGSGKT. Residues 254–257 carry the DEAD box motif; it reads DEAD. A Helicase C-terminal domain is found at 340 to 523; the sequence is LVLLKLELIQ…PFPLLTKNAV (184 aa). The disordered stretch occupies residues 616 to 670; the sequence is DIDKPRRRKRMGFKGGSGRSSDPLKTFSAEGKSRRRGRKERDGEQDRRKRKKVES. Residues 654–670 show a composition bias toward basic and acidic residues; that stretch reads KERDGEQDRRKRKKVES.

Belongs to the DEAD box helicase family. DDX56/DBP9 subfamily.

It carries out the reaction ATP + H2O = ADP + phosphate + H(+). This chain is DEAD-box ATP-dependent RNA helicase 16, found in Oryza sativa subsp. japonica (Rice).